A 62-amino-acid chain; its full sequence is Large ribosomal subunit protein bL28 (62 aa).

Positions 1 to 22 are disordered; it reads MGKQCFVTGRKASTGNRRSHAL.

The protein belongs to the bacterial ribosomal protein bL28 family.

This Staphylococcus aureus (strain N315) protein is Large ribosomal subunit protein bL28.